Here is a 451-residue protein sequence, read N- to C-terminus: Probable gamma-glutamyl phosphate reductase (451 aa).

Belongs to the gamma-glutamyl phosphate reductase family.

The catalysed reaction is L-glutamate 5-semialdehyde + phosphate + NADP(+) = L-glutamyl 5-phosphate + NADPH + H(+). The protein operates within amino-acid biosynthesis; L-proline biosynthesis; L-glutamate 5-semialdehyde from L-glutamate: step 2/2. Its function is as follows. Catalyzes the NADPH dependent reduction of L-gamma-glutamyl 5-phosphate into L-glutamate 5-semialdehyde and phosphate. The product spontaneously undergoes cyclization to form 1-pyrroline-5-carboxylate. The polypeptide is Probable gamma-glutamyl phosphate reductase (pro1) (Schizosaccharomyces pombe (strain 972 / ATCC 24843) (Fission yeast)).